A 205-amino-acid polypeptide reads, in one-letter code: Probable GTP-binding protein EngB (205 aa).

Residues 21–196 (QVPEVAFAGR…VHEVSKCVKE (176 aa)) enclose the EngB-type G domain. Residues 29 to 36 (GRSNVGKS), 56 to 60 (GSTRQ), 74 to 77 (DLPG), 141 to 144 (TKID), and 172 to 177 (IIGTSS) contribute to the GTP site. Residues Ser36 and Thr58 each contribute to the Mg(2+) site.

The protein belongs to the TRAFAC class TrmE-Era-EngA-EngB-Septin-like GTPase superfamily. EngB GTPase family. Mg(2+) serves as cofactor.

Its function is as follows. Necessary for normal cell division and for the maintenance of normal septation. This Anaplasma marginale (strain Florida) protein is Probable GTP-binding protein EngB.